Reading from the N-terminus, the 287-residue chain is Bifunctional protein FolD (287 aa).

Residues 166 to 168 and Ile232 each bind NADP(+); that span reads GAS.

It belongs to the tetrahydrofolate dehydrogenase/cyclohydrolase family. As to quaternary structure, homodimer.

The catalysed reaction is (6R)-5,10-methylene-5,6,7,8-tetrahydrofolate + NADP(+) = (6R)-5,10-methenyltetrahydrofolate + NADPH. It carries out the reaction (6R)-5,10-methenyltetrahydrofolate + H2O = (6R)-10-formyltetrahydrofolate + H(+). The protein operates within one-carbon metabolism; tetrahydrofolate interconversion. Functionally, catalyzes the oxidation of 5,10-methylenetetrahydrofolate to 5,10-methenyltetrahydrofolate and then the hydrolysis of 5,10-methenyltetrahydrofolate to 10-formyltetrahydrofolate. The sequence is that of Bifunctional protein FolD from Aeromonas salmonicida (strain A449).